A 114-amino-acid chain; its full sequence is Class I hydrophobin SC16 (114 aa).

An N-terminal signal peptide occupies residues 1–17 (MRFFATLVLALPALAMA). 4 disulfides stabilise this stretch: C33–C93, C40–C87, C41–C74, and C94–C107. A glycan (N-linked (GlcNAc...) asparagine) is linked at N42.

It belongs to the fungal hydrophobin family. As to quaternary structure, self-assembles to form functional amyloid fibrils called rodlets. Self-assembly into fibrillar rodlets occurs spontaneously at hydrophobic:hydrophilic interfaces and the rodlets further associate laterally to form amphipathic monolayers.

The protein resides in the secreted. It localises to the cell wall. Aerial growth, conidiation, and dispersal of filamentous fungi in the environment rely upon a capability of their secreting small amphipathic proteins called hydrophobins (HPBs) with low sequence identity. Class I can self-assemble into an outermost layer of rodlet bundles on aerial cell surfaces, conferring cellular hydrophobicity that supports fungal growth, development and dispersal; whereas Class II form highly ordered films at water-air interfaces through intermolecular interactions but contribute nothing to the rodlet structure. This chain is Class I hydrophobin SC16, found in Schizophyllum commune (strain H4-8 / FGSC 9210) (Split gill fungus).